A 781-amino-acid polypeptide reads, in one-letter code: MAP7 domain-containing protein 2 (781 aa).

The segment covering 1–32 (MERSGGNGGGGGGGGGGGGGYGGSGGGGGGAG) has biased composition (gly residues). Disordered regions lie at residues 1–37 (MERS…PSEG), 50–87 (AEAA…REER), 120–567 (LEEQ…AAKQ), and 597–628 (TRKS…ANKA). Composition is skewed to basic and acidic residues over residues 71-87 (LKSD…REER) and 120-158 (LEEQ…RSLE). The stretch at 73–168 (SDERQRLAKE…RTQQLELKKK (96 aa)) forms a coiled coil. Over residues 192–210 (LTLATSTPPLDTGTTTAAA) the composition is skewed to low complexity. Polar residues-rich tracts occupy residues 211–245 (ESTN…TVAI) and 257–267 (LKSSYKSSPTR). Residues 318–328 (RRCEPPEDISK) are compositionally biased toward basic and acidic residues. Over residues 329–348 (RLSSPVKSKITSKTYPQSPK) the composition is skewed to polar residues. Basic and acidic residues-rich tracts occupy residues 370-387 (ETPK…EKEG), 397-436 (PREE…EHSA), 453-567 (LAEK…AAKQ), and 597-613 (TRKS…DPKV).

This sequence belongs to the MAP7 family. As to quaternary structure, interacts (via N-terminus) with microtubules; facilitates microtubule stabilization. Interacts with kinesin-1 family members, KIF5A, KIF5B and KIF5C. In terms of tissue distribution, expressed predominantly in the glomerular layer of the olfactory bulb and Sertoli cells of the testis.

The protein localises to the cytoplasm. It is found in the cytoskeleton. The protein resides in the microtubule organizing center. It localises to the centrosome. Its subcellular location is the midbody. The protein localises to the cell projection. It is found in the neuron projection. The protein resides in the axon. In terms of biological role, microtubule-stabilizing protein involved in the control of cell motility and neurite outgrowth. Acts as a critical cofactor for kinesin transport; in the proximal axon regulates kinesin-1 family members, KIF5A, KIF5B and KIF5C recruitment to microtubules and contributes to kinesin-1-mediated transport in the axons. The chain is MAP7 domain-containing protein 2 (Map7d2) from Mus musculus (Mouse).